The chain runs to 495 residues: Ectonucleoside triphosphate diphosphohydrolase 2 (495 aa).

The Cytoplasmic portion of the chain corresponds to 2–4 (ARR). A helical transmembrane segment spans residues 5–25 (AAAVLLLLALGCLLGILLLCL). Residues 26–465 (GSGDARGPPS…SHRSMLYNYW (440 aa)) are Extracellular-facing. N62 is a glycosylation site (N-linked (GlcNAc...) asparagine). C73 and C97 are joined by a disulfide. Residue E162 is the Proton acceptor of the active site. 201 to 205 (GASTQ) contributes to the ATP binding site. 4 cysteine pairs are disulfide-bonded: C239/C286, C267/C311, C324/C329, and C378/C400. A glycan (N-linked (GlcNAc...) asparagine) is linked at N297. 2 N-linked (GlcNAc...) asparagine glycosylation sites follow: N418 and N444. The helical transmembrane segment at 466–486 (VILILLFVITTLTALLTAVYL) threads the bilayer. The Cytoplasmic portion of the chain corresponds to 487–495 (LRRSKSSTI).

The protein belongs to the GDA1/CD39 NTPase family. Ca(2+) is required as a cofactor. Requires Mg(2+) as cofactor.

It localises to the membrane. Functionally, in the nervous system, could hydrolyze ATP and other nucleotides to regulate purinergic neurotransmission. Hydrolyzes ADP only to a marginal extent. This Gallus gallus (Chicken) protein is Ectonucleoside triphosphate diphosphohydrolase 2 (ENTPD2).